The chain runs to 180 residues: Large ribosomal subunit protein uL5 (180 aa).

It belongs to the universal ribosomal protein uL5 family. In terms of assembly, part of the 50S ribosomal subunit; part of the 5S rRNA/L5/L18/L25 subcomplex. Contacts the 5S rRNA and the P site tRNA. Forms a bridge to the 30S subunit in the 70S ribosome.

Its function is as follows. This is one of the proteins that bind and probably mediate the attachment of the 5S RNA into the large ribosomal subunit, where it forms part of the central protuberance. In the 70S ribosome it contacts protein S13 of the 30S subunit (bridge B1b), connecting the 2 subunits; this bridge is implicated in subunit movement. Contacts the P site tRNA; the 5S rRNA and some of its associated proteins might help stabilize positioning of ribosome-bound tRNAs. This Latilactobacillus sakei subsp. sakei (strain 23K) (Lactobacillus sakei subsp. sakei) protein is Large ribosomal subunit protein uL5.